We begin with the raw amino-acid sequence, 296 residues long: Polyadenylate-binding protein 2 (296 aa).

The disordered stretch occupies residues 1-102 (MAAVSSAASL…EEEPGELTGD (102 aa)). Composition is skewed to gly residues over residues 19–31 (LRGG…GGQD) and 71–82 (GRGGSGGGGAGG). Residues 84–97 (EELEDEELEEEEPG) show a composition bias toward acidic residues. Residues 107 to 141 (DPELEAIKARVREMEEEAEKLKELQNEVEKQMNMS) are a coiled coil. Residues 146–296 (NAGPVIMSIE…ARVTSWYTPY (151 aa)) are necessary for homooligomerization. The RRM domain maps to 163 to 240 (RSIYVGNVDY…RQIKVVPKRT (78 aa)).

Monomer and homooligomer. Binds RNA as a monomer and oligomerizes when bound to poly(A).

The protein resides in the nucleus. It is found in the cytoplasm. In terms of biological role, involved in the 3'-end formation of mRNA precursors (pre-mRNA) by the addition of a poly(A) tail of 200-250 nt to the upstream cleavage product. Stimulates poly(A) polymerase (PAPOLA) conferring processivity on the poly(A) tail elongation reaction and also controls the poly(A) tail length. Increases the affinity of poly(A) polymerase for RNA. Binds to poly(A) and to poly(G) with high affinity. May protect the poly(A) tail from degradation. The protein is Polyadenylate-binding protein 2 of Xenopus tropicalis (Western clawed frog).